Reading from the N-terminus, the 811-residue chain is G-type lectin S-receptor-like serine/threonine-protein kinase LECRK3 (811 aa).

A signal peptide spans 1 to 23 (MAHLLFLPILQLLLLYCTKSAQA). Residues 24–153 (QLNISIGSSL…DGATKWESFG (130 aa)) enclose the Bulb-type lectin domain. The Extracellular portion of the chain corresponds to 24-464 (QLNISIGSSL…DKKYWILGSS (441 aa)). 7 N-linked (GlcNAc...) asparagine glycosylation sites follow: Asn-26, Asn-39, Asn-59, Asn-219, Asn-226, Asn-237, and Asn-242. Residues 292–344 (PENICQSIQTMVGSGACGFNSYCTIDGTKNTTSCLCPQNYKFIDDKRKYKGCR) form the EGF-like; atypical domain. 5 disulfide bridges follow: Cys-296–Cys-314, Cys-308–Cys-325, Cys-327–Cys-343, Cys-389–Cys-411, and Cys-393–Cys-399. The N-linked (GlcNAc...) asparagine glycan is linked to Asn-321. The PAN domain occupies 352-430 (CDLDETTAML…GKMDVNVPRT (79 aa)). A helical transmembrane segment spans residues 465-485 (LLFGSSVLVNFLLISVMLFGT). Residues 486 to 811 (YCSITSRKKI…DPSSYISSLA (326 aa)) are Cytoplasmic-facing. In terms of domain architecture, Protein kinase spans 521 to 795 (GGFQEVLGTG…KVTQMLDGAV (275 aa)). ATP-binding positions include 527-535 (LGTGASGVV) and Lys-551. Catalysis depends on Asp-645, which acts as the Proton acceptor.

It belongs to the protein kinase superfamily. Ser/Thr protein kinase family.

It is found in the membrane. It carries out the reaction L-seryl-[protein] + ATP = O-phospho-L-seryl-[protein] + ADP + H(+). The enzyme catalyses L-threonyl-[protein] + ATP = O-phospho-L-threonyl-[protein] + ADP + H(+). In terms of biological role, involved in resistance against the herbivorous insect brown planthopper (N.lugens, BPH). Member of the BPH3 (BPH resistance locus 3) cluster which contains LECRK1, LECRK2 and LECRK3. This is G-type lectin S-receptor-like serine/threonine-protein kinase LECRK3 from Oryza sativa subsp. indica (Rice).